Here is a 383-residue protein sequence, read N- to C-terminus: Centractin (383 aa).

The interval 227–246 (PQKEEELLEPDSSSSKPVQP) is disordered.

It belongs to the actin family. ARP1 subfamily.

The protein localises to the cytoplasm. The protein resides in the cytoskeleton. It localises to the microtubule organizing center. It is found in the centrosome. Its function is as follows. Component of a multi-subunit complex, PPK2 (poly P kinase complex 2) involved in microtubule based vesicle motility. It is associated with the centrosome. PPK2 complex can synthesize a poly chain of hundreds of phosphate residues linked by ATP-like bonds. The chain is Centractin (arpA) from Dictyostelium discoideum (Social amoeba).